Reading from the N-terminus, the 266-residue chain is 3-methyl-2-oxobutanoate hydroxymethyltransferase (266 aa).

2 residues coordinate Mg(2+): Asp45 and Asp84. 3-methyl-2-oxobutanoate-binding positions include 45–46 (DS), Asp84, and Lys112. Mg(2+) is bound at residue Glu114. Glu181 functions as the Proton acceptor in the catalytic mechanism.

This sequence belongs to the PanB family. In terms of assembly, homodecamer; pentamer of dimers. The cofactor is Mg(2+).

It is found in the cytoplasm. The enzyme catalyses 3-methyl-2-oxobutanoate + (6R)-5,10-methylene-5,6,7,8-tetrahydrofolate + H2O = 2-dehydropantoate + (6S)-5,6,7,8-tetrahydrofolate. Its pathway is cofactor biosynthesis; (R)-pantothenate biosynthesis; (R)-pantoate from 3-methyl-2-oxobutanoate: step 1/2. Its function is as follows. Catalyzes the reversible reaction in which hydroxymethyl group from 5,10-methylenetetrahydrofolate is transferred onto alpha-ketoisovalerate to form ketopantoate. In Pseudomonas savastanoi pv. phaseolicola (strain 1448A / Race 6) (Pseudomonas syringae pv. phaseolicola (strain 1448A / Race 6)), this protein is 3-methyl-2-oxobutanoate hydroxymethyltransferase.